Consider the following 201-residue polypeptide: Pyridoxal 5'-phosphate synthase subunit PdxT (201 aa).

50-52 (GES) is an L-glutamine binding site. The active-site Nucleophile is C82. L-glutamine-binding positions include R115 and 143-144 (IR). Active-site charge relay system residues include H179 and E181.

It belongs to the glutaminase PdxT/SNO family. In the presence of PdxS, forms a dodecamer of heterodimers. Only shows activity in the heterodimer.

The catalysed reaction is aldehydo-D-ribose 5-phosphate + D-glyceraldehyde 3-phosphate + L-glutamine = pyridoxal 5'-phosphate + L-glutamate + phosphate + 3 H2O + H(+). It carries out the reaction L-glutamine + H2O = L-glutamate + NH4(+). The protein operates within cofactor biosynthesis; pyridoxal 5'-phosphate biosynthesis. In terms of biological role, catalyzes the hydrolysis of glutamine to glutamate and ammonia as part of the biosynthesis of pyridoxal 5'-phosphate. The resulting ammonia molecule is channeled to the active site of PdxS. The chain is Pyridoxal 5'-phosphate synthase subunit PdxT from Deinococcus geothermalis (strain DSM 11300 / CIP 105573 / AG-3a).